Here is a 429-residue protein sequence, read N- to C-terminus: Tubby-like F-box protein 5 (429 aa).

The region spanning 53–108 (TRWANLPAALLRDVMKKLDESESTWPARKQVVACAGVCKTWRLMCKDIVKSPEFSG) is the F-box domain. The tract at residues 360-385 (QPGSGSDGGALATRPSLSPQQPEQSN) is disordered. Over residues 374–383 (PSLSPQQPEQ) the composition is skewed to polar residues.

It belongs to the TUB family. In terms of tissue distribution, mostly expressed in roots, flowers and siliques.

This chain is Tubby-like F-box protein 5, found in Arabidopsis thaliana (Mouse-ear cress).